Consider the following 381-residue polypeptide: ATP synthase subunit a (381 aa).

Residues Pro24–His73 are disordered. Positions Ala47–Ala59 are enriched in low complexity. Positions Ala60–His73 are enriched in basic and acidic residues. Helical transmembrane passes span Lys128 to Val148, Leu190 to Ala210, Asn215 to Ile235, Leu255 to Phe275, Phe290 to Gly310, and Leu316 to Leu336. Basic and acidic residues predominate over residues Asp351–His360. A disordered region spans residues Asp351–Gly381.

The protein belongs to the ATPase A chain family. As to quaternary structure, F-type ATPases have 2 components, CF(1) - the catalytic core - and CF(0) - the membrane proton channel. CF(1) has five subunits: alpha(3), beta(3), gamma(1), delta(1), epsilon(1). CF(0) has three main subunits: a(1), b(2) and c(9-12). The alpha and beta chains form an alternating ring which encloses part of the gamma chain. CF(1) is attached to CF(0) by a central stalk formed by the gamma and epsilon chains, while a peripheral stalk is formed by the delta and b chains.

The protein localises to the cell inner membrane. In terms of biological role, key component of the proton channel; it plays a direct role in the translocation of protons across the membrane. The polypeptide is ATP synthase subunit a (Anaeromyxobacter dehalogenans (strain 2CP-C)).